The chain runs to 823 residues: Valine--tRNA ligase (823 aa).

K547 is a binding site for ATP.

The protein belongs to the class-I aminoacyl-tRNA synthetase family. ValS type 2 subfamily.

Its subcellular location is the cytoplasm. The catalysed reaction is tRNA(Val) + L-valine + ATP = L-valyl-tRNA(Val) + AMP + diphosphate. In terms of biological role, catalyzes the attachment of valine to tRNA(Val). As ValRS can inadvertently accommodate and process structurally similar amino acids such as threonine, to avoid such errors, it has a 'posttransfer' editing activity that hydrolyzes mischarged Thr-tRNA(Val) in a tRNA-dependent manner. The polypeptide is Valine--tRNA ligase (valS) (Aeropyrum pernix (strain ATCC 700893 / DSM 11879 / JCM 9820 / NBRC 100138 / K1)).